We begin with the raw amino-acid sequence, 214 residues long: Pyridoxine/pyridoxamine 5'-phosphate oxidase (214 aa).

Substrate is bound by residues 8-11 (RKSY) and Lys67. FMN is bound by residues 62–67 (RVVLLK), 77–78 (YT), Lys84, and Gln106. Substrate is bound by residues Tyr124, Arg128, and Ser132. FMN-binding positions include 141–142 (QS) and Trp186. 192-194 (RLH) lines the substrate pocket. Arg196 contacts FMN.

The protein belongs to the pyridoxamine 5'-phosphate oxidase family. As to quaternary structure, homodimer. FMN serves as cofactor.

It catalyses the reaction pyridoxamine 5'-phosphate + O2 + H2O = pyridoxal 5'-phosphate + H2O2 + NH4(+). The enzyme catalyses pyridoxine 5'-phosphate + O2 = pyridoxal 5'-phosphate + H2O2. Its pathway is cofactor metabolism; pyridoxal 5'-phosphate salvage; pyridoxal 5'-phosphate from pyridoxamine 5'-phosphate: step 1/1. The protein operates within cofactor metabolism; pyridoxal 5'-phosphate salvage; pyridoxal 5'-phosphate from pyridoxine 5'-phosphate: step 1/1. Catalyzes the oxidation of either pyridoxine 5'-phosphate (PNP) or pyridoxamine 5'-phosphate (PMP) into pyridoxal 5'-phosphate (PLP). This chain is Pyridoxine/pyridoxamine 5'-phosphate oxidase, found in Flavobacterium johnsoniae (strain ATCC 17061 / DSM 2064 / JCM 8514 / BCRC 14874 / CCUG 350202 / NBRC 14942 / NCIMB 11054 / UW101) (Cytophaga johnsonae).